The following is a 127-amino-acid chain: Photosystem II reaction center Psb28 protein (127 aa).

The segment at 108 to 127 (LGYSQSQDSDQTEGADNQQA) is disordered. Positions 109-127 (GYSQSQDSDQTEGADNQQA) are enriched in polar residues.

The protein belongs to the Psb28 family. Part of the photosystem II complex.

Its subcellular location is the cellular thylakoid membrane. The protein is Photosystem II reaction center Psb28 protein of Synechococcus sp. (strain CC9605).